A 303-amino-acid polypeptide reads, in one-letter code: Protoheme IX farnesyltransferase (303 aa).

Helical transmembrane passes span 25-45, 54-74, 104-124, 125-145, 151-171, 179-199, 228-248, and 280-300; these read MGLV…AIVL, IPQI…ACAL, LLIL…ILNI, PSGV…SIWS, WNTV…WTAI, AIAL…ALAI, VWLI…PVFI, and FVYS…ISLI.

Belongs to the UbiA prenyltransferase family. Protoheme IX farnesyltransferase subfamily. Interacts with CtaA.

The protein localises to the cell membrane. It carries out the reaction heme b + (2E,6E)-farnesyl diphosphate + H2O = Fe(II)-heme o + diphosphate. Its pathway is porphyrin-containing compound metabolism; heme O biosynthesis; heme O from protoheme: step 1/1. Converts heme B (protoheme IX) to heme O by substitution of the vinyl group on carbon 2 of heme B porphyrin ring with a hydroxyethyl farnesyl side group. This is Protoheme IX farnesyltransferase from Staphylococcus carnosus (strain TM300).